The chain runs to 279 residues: Fatty acid metabolism regulator protein (279 aa).

In terms of domain architecture, HTH gntR-type spans 6–74; that stretch reads KSPAGFAEKY…HGKPTKVNQF (69 aa). The segment at residues 34–53 is a DNA-binding region (H-T-H motif); sequence ERELSELIGVTRTTLREVLQ.

Homodimer.

The protein localises to the cytoplasm. Multifunctional regulator of fatty acid metabolism. The sequence is that of Fatty acid metabolism regulator protein from Vibrio cholerae serotype O1 (strain ATCC 39541 / Classical Ogawa 395 / O395).